A 256-amino-acid chain; its full sequence is PGL/p-HBAD biosynthesis glycosyltransferase Mb2981 (256 aa).

It belongs to the glycosyltransferase 2 family.

Its function is as follows. Involved in glycosylation steps downstream of mono-O-methyl-glycosyl-p-hydroxybenzoic acid derivative (p-HBAD I) and 2-O-methyl-rhamnosyl-phenolphthiocerol dimycocerosate (mycoside B) during the p-hydroxybenzoic acid derivatives (p-HBAD) and glycosylated phenolphthiocerol dimycocerosates (PGL) biosynthesis. The protein is PGL/p-HBAD biosynthesis glycosyltransferase Mb2981 of Mycobacterium bovis (strain ATCC BAA-935 / AF2122/97).